Reading from the N-terminus, the 546-residue chain is MKKFLKYLLVLIILILIAGIVFLFRPIASKQVQTAKDEPVVDAVLVGGGIMSATLGTYFTELEPNWQIRMFERLDQVAQESSNGFNNAGTGHSGFMEMNYTEEKNGKMEIAKAEKVASQFEVAKQFWSYQVKQGVLAEPKTFINPVPHIAFVWGDNVKFLEKRYAAMIQSPLFKGMKFTEDPAVIKQWAPLVMTDRDPTQKVAATRMEVGSDVNYGSITKQLVNHLNQNPNFKLQTSTEVTGISQNDDKTWTVSFKNLKTGKTDHVKTRFVFIGAGGAAVKLLQLTGLPEAKQYAGFPVGGEFLITDNPAITAQHTAKVYGRAELGAPPMSVPHIDTRYIDGKKYVLFGPFATYSNKFLKNGSQLDLLASTNKSNVLPMTTVGLENLDLVKYLVSQVMMSDEDRLNELRKYYPDAKAEDWRLSQGGQRVQIIKKEPGKPATLQFGTEIFASKDGAVTALLGASPGASTSPYIMLNLLEKAFPQQTEGKWNQKLHEIVVSYKQDLSKDPVLLDKVRQYTSSTLGLNYTSPFKAANDETAAAPVAKAN.

The protein belongs to the MQO family. The cofactor is FAD.

The catalysed reaction is (S)-malate + a quinone = a quinol + oxaloacetate. The protein operates within carbohydrate metabolism; tricarboxylic acid cycle; oxaloacetate from (S)-malate (quinone route): step 1/1. The sequence is that of Probable malate:quinone oxidoreductase from Acinetobacter baumannii (strain ACICU).